Reading from the N-terminus, the 181-residue chain is Protein GrpE (181 aa).

The span at 1 to 13 (MENTQENPATQSA) shows a compositional bias: polar residues. The tract at residues 1–39 (MENTQENPATQSAEDIGSEKQAAQGAAPAAEAADAALAE) is disordered. The segment covering 21–39 (QAAQGAAPAAEAADAALAE) has biased composition (low complexity).

It belongs to the GrpE family. In terms of assembly, homodimer.

The protein resides in the cytoplasm. Participates actively in the response to hyperosmotic and heat shock by preventing the aggregation of stress-denatured proteins, in association with DnaK and GrpE. It is the nucleotide exchange factor for DnaK and may function as a thermosensor. Unfolded proteins bind initially to DnaJ; upon interaction with the DnaJ-bound protein, DnaK hydrolyzes its bound ATP, resulting in the formation of a stable complex. GrpE releases ADP from DnaK; ATP binding to DnaK triggers the release of the substrate protein, thus completing the reaction cycle. Several rounds of ATP-dependent interactions between DnaJ, DnaK and GrpE are required for fully efficient folding. The chain is Protein GrpE from Burkholderia lata (strain ATCC 17760 / DSM 23089 / LMG 22485 / NCIMB 9086 / R18194 / 383).